The following is a 476-amino-acid chain: WD repeat, SAM and U-box domain-containing protein 1 (476 aa).

7 WD repeats span residues 10 to 47 (DHGD…ELPH), 52 to 91 (FHTY…MLAV), 95 to 134 (PSGS…LYRC), 137 to 176 (VKDG…LHSE), 178 to 228 (AHDL…LGFE), 237 to 276 (GHCA…ILHT), and 279 to 318 (QHTR…LCQA). Residues 332–396 (WSEEDVSTWL…LRKIEELRTK (65 aa)) enclose the SAM domain. Positions 403–476 (GIPDEFICPI…INRWLETHQK (74 aa)) constitute a U-box domain. Residue T458 is modified to Phosphothreonine.

This chain is WD repeat, SAM and U-box domain-containing protein 1 (WDSUB1), found in Homo sapiens (Human).